The chain runs to 151 residues: D-aminoacyl-tRNA deacylase (151 aa).

The Gly-cisPro motif, important for rejection of L-amino acids signature appears at 137 to 138; sequence GP.

It belongs to the DTD family. In terms of assembly, homodimer.

It localises to the cytoplasm. The enzyme catalyses glycyl-tRNA(Ala) + H2O = tRNA(Ala) + glycine + H(+). The catalysed reaction is a D-aminoacyl-tRNA + H2O = a tRNA + a D-alpha-amino acid + H(+). Functionally, an aminoacyl-tRNA editing enzyme that deacylates mischarged D-aminoacyl-tRNAs. Also deacylates mischarged glycyl-tRNA(Ala), protecting cells against glycine mischarging by AlaRS. Acts via tRNA-based rather than protein-based catalysis; rejects L-amino acids rather than detecting D-amino acids in the active site. By recycling D-aminoacyl-tRNA to D-amino acids and free tRNA molecules, this enzyme counteracts the toxicity associated with the formation of D-aminoacyl-tRNA entities in vivo and helps enforce protein L-homochirality. This is D-aminoacyl-tRNA deacylase from Azoarcus sp. (strain BH72).